The chain runs to 359 residues: Histidinol-phosphate aminotransferase (359 aa).

An N6-(pyridoxal phosphate)lysine modification is found at K217.

Belongs to the class-II pyridoxal-phosphate-dependent aminotransferase family. Histidinol-phosphate aminotransferase subfamily. As to quaternary structure, homodimer. Pyridoxal 5'-phosphate serves as cofactor.

The catalysed reaction is L-histidinol phosphate + 2-oxoglutarate = 3-(imidazol-4-yl)-2-oxopropyl phosphate + L-glutamate. The protein operates within amino-acid biosynthesis; L-histidine biosynthesis; L-histidine from 5-phospho-alpha-D-ribose 1-diphosphate: step 7/9. This is Histidinol-phosphate aminotransferase from Salmonella newport (strain SL254).